Reading from the N-terminus, the 420-residue chain is Serine--tRNA ligase (420 aa).

Position 227–229 (227–229 (TSE)) interacts with L-serine. ATP is bound by residues 258–260 (RRE) and V274. Residue E281 coordinates L-serine. An ATP-binding site is contributed by 345-348 (ELTS). T380 is an L-serine binding site.

It belongs to the class-II aminoacyl-tRNA synthetase family. Type-1 seryl-tRNA synthetase subfamily. In terms of assembly, homodimer. The tRNA molecule binds across the dimer.

The protein resides in the cytoplasm. The enzyme catalyses tRNA(Ser) + L-serine + ATP = L-seryl-tRNA(Ser) + AMP + diphosphate + H(+). It carries out the reaction tRNA(Sec) + L-serine + ATP = L-seryl-tRNA(Sec) + AMP + diphosphate + H(+). It participates in aminoacyl-tRNA biosynthesis; selenocysteinyl-tRNA(Sec) biosynthesis; L-seryl-tRNA(Sec) from L-serine and tRNA(Sec): step 1/1. Functionally, catalyzes the attachment of serine to tRNA(Ser). Is also able to aminoacylate tRNA(Sec) with serine, to form the misacylated tRNA L-seryl-tRNA(Sec), which will be further converted into selenocysteinyl-tRNA(Sec). The chain is Serine--tRNA ligase from Nocardia farcinica (strain IFM 10152).